The sequence spans 315 residues: Lipoyl synthase (315 aa).

Residues Cys-62, Cys-67, Cys-73, Cys-88, Cys-92, Cys-95, and Ser-302 each contribute to the [4Fe-4S] cluster site. Residues 73–291 (CFGHGTATFM…GELAKKLGFS (219 aa)) form the Radical SAM core domain.

The protein belongs to the radical SAM superfamily. Lipoyl synthase family. The cofactor is [4Fe-4S] cluster.

The protein resides in the cytoplasm. The enzyme catalyses [[Fe-S] cluster scaffold protein carrying a second [4Fe-4S](2+) cluster] + N(6)-octanoyl-L-lysyl-[protein] + 2 oxidized [2Fe-2S]-[ferredoxin] + 2 S-adenosyl-L-methionine + 4 H(+) = [[Fe-S] cluster scaffold protein] + N(6)-[(R)-dihydrolipoyl]-L-lysyl-[protein] + 4 Fe(3+) + 2 hydrogen sulfide + 2 5'-deoxyadenosine + 2 L-methionine + 2 reduced [2Fe-2S]-[ferredoxin]. The protein operates within protein modification; protein lipoylation via endogenous pathway; protein N(6)-(lipoyl)lysine from octanoyl-[acyl-carrier-protein]: step 2/2. In terms of biological role, catalyzes the radical-mediated insertion of two sulfur atoms into the C-6 and C-8 positions of the octanoyl moiety bound to the lipoyl domains of lipoate-dependent enzymes, thereby converting the octanoylated domains into lipoylated derivatives. The protein is Lipoyl synthase of Coxiella burnetii (strain CbuG_Q212) (Coxiella burnetii (strain Q212)).